The chain runs to 360 residues: Photosystem II protein D1 (360 aa).

3 consecutive transmembrane segments (helical) span residues 32 to 49 (YLGWFGCLMVPTLVSATF), 121 to 136 (HFFIGVCSYLGREWEL), and 145 to 159 (WIFVAFSAPVAAASA). His-121 is a chlorophyll a binding site. Tyr-129 lines the pheophytin a pocket. [CaMn4O5] cluster-binding residues include Asp-173 and Glu-192. Residues 200–221 (LHMFGVAAVFGGSLFSAMHGSL) form a helical membrane-spanning segment. His-201 is a binding site for chlorophyll a. Residues His-218 and 267–268 (SF) contribute to the a quinone site. His-218 is a Fe cation binding site. Fe cation is bound at residue His-275. A helical membrane pass occupies residues 277 to 291 (FLGAWPVVGIWLTAM). His-335, Glu-336, Asp-345, and Ala-347 together coordinate [CaMn4O5] cluster. The propeptide occupies 348 to 360 (CANCLLSLWPMVG).

The protein belongs to the reaction center PufL/M/PsbA/D family. As to quaternary structure, PSII is composed of 1 copy each of membrane proteins PsbA, PsbB, PsbC, PsbD, PsbE, PsbF, PsbH, PsbI, PsbJ, PsbK, PsbL, PsbM, PsbT, PsbX, PsbY, PsbZ, Psb30/Ycf12, at least 3 peripheral proteins of the oxygen-evolving complex and a large number of cofactors. It forms dimeric complexes. It depends on The D1/D2 heterodimer binds P680, chlorophylls that are the primary electron donor of PSII, and subsequent electron acceptors. It shares a non-heme iron and each subunit binds pheophytin, quinone, additional chlorophylls, carotenoids and lipids. D1 provides most of the ligands for the Mn4-Ca-O5 cluster of the oxygen-evolving complex (OEC). There is also a Cl(-1) ion associated with D1 and D2, which is required for oxygen evolution. The PSII complex binds additional chlorophylls, carotenoids and specific lipids. as a cofactor. Post-translationally, tyr-164 forms a radical intermediate that is referred to as redox-active TyrZ, YZ or Y-Z. In terms of processing, C-terminally processed by CtpA; processing is essential to allow assembly of the oxygen-evolving complex and thus photosynthetic growth.

Its subcellular location is the plastid. The protein localises to the chloroplast thylakoid membrane. The catalysed reaction is 2 a plastoquinone + 4 hnu + 2 H2O = 2 a plastoquinol + O2. Functionally, photosystem II (PSII) is a light-driven water:plastoquinone oxidoreductase that uses light energy to abstract electrons from H(2)O, generating O(2) and a proton gradient subsequently used for ATP formation. It consists of a core antenna complex that captures photons, and an electron transfer chain that converts photonic excitation into a charge separation. The D1/D2 (PsbA/PsbD) reaction center heterodimer binds P680, the primary electron donor of PSII as well as several subsequent electron acceptors. In Karenia mikimotoi (Red tide dinoflagellate), this protein is Photosystem II protein D1.